The following is a 162-amino-acid chain: D-aminoacyl-tRNA deacylase (162 aa).

The Gly-cisPro motif, important for rejection of L-amino acids motif lies at 145-146 (GP).

This sequence belongs to the DTD family. As to quaternary structure, homodimer.

The protein resides in the cytoplasm. It carries out the reaction glycyl-tRNA(Ala) + H2O = tRNA(Ala) + glycine + H(+). The catalysed reaction is a D-aminoacyl-tRNA + H2O = a tRNA + a D-alpha-amino acid + H(+). Functionally, an aminoacyl-tRNA editing enzyme that deacylates mischarged D-aminoacyl-tRNAs. Also deacylates mischarged glycyl-tRNA(Ala), protecting cells against glycine mischarging by AlaRS. Acts via tRNA-based rather than protein-based catalysis; rejects L-amino acids rather than detecting D-amino acids in the active site. By recycling D-aminoacyl-tRNA to D-amino acids and free tRNA molecules, this enzyme counteracts the toxicity associated with the formation of D-aminoacyl-tRNA entities in vivo and helps enforce protein L-homochirality. This chain is D-aminoacyl-tRNA deacylase, found in Bifidobacterium longum (strain DJO10A).